The primary structure comprises 468 residues: Cysteine--tRNA ligase (468 aa).

Cys-27 contributes to the Zn(2+) binding site. A 'HIGH' region motif is present at residues 29–39; sequence PTVYNYFHIGN. 3 residues coordinate Zn(2+): Cys-207, His-232, and Glu-236. The 'KMSKS' region signature appears at 264-268; that stretch reads KMAKS. Lys-267 is an ATP binding site.

It belongs to the class-I aminoacyl-tRNA synthetase family. In terms of assembly, monomer. The cofactor is Zn(2+).

The protein localises to the cytoplasm. The catalysed reaction is tRNA(Cys) + L-cysteine + ATP = L-cysteinyl-tRNA(Cys) + AMP + diphosphate. The protein is Cysteine--tRNA ligase of Acetivibrio thermocellus (strain ATCC 27405 / DSM 1237 / JCM 9322 / NBRC 103400 / NCIMB 10682 / NRRL B-4536 / VPI 7372) (Clostridium thermocellum).